Here is a 639-residue protein sequence, read N- to C-terminus: mRNA export factor (639 aa).

Disordered regions lie at residues 1–45 (MQAE…SLES), 63–287 (LLGD…KWGA), and 322–355 (CTAR…SQPR). A compositionally biased stretch (basic residues) spans 142–152 (PRRRTHARSRS). The span at 153-169 (PRAGSTSSQQPPSSSGG) shows a compositional bias: low complexity. Over residues 175 to 189 (VRREAGDRETSEKPA) the composition is skewed to basic and acidic residues. The span at 203 to 215 (HQCQSPPAQTASQ) shows a compositional bias: polar residues. Basic and acidic residues-rich tracts occupy residues 234–247 (RTPH…HEGA) and 326–348 (DPAR…ERRT). 4 residues coordinate Zn(2+): Cys525, His606, Cys610, and Cys615. The CHC2-type zinc-finger motif lies at 525-615 (CHLAASKSPL…HANVCRKEEC (91 aa)).

This sequence belongs to the HHV-1 ICP27 protein family.

Its subcellular location is the host cytoplasm. It is found in the host nucleus. Functionally, multifunctional regulator of the expression of viral genes that mediates nuclear export of viral intronless mRNAs. This immediate early (EI) protein promotes the nuclear export of viral intronless mRNAs. The sequence is that of mRNA export factor from Amazona oratrix (yellow-headed parrot).